Consider the following 351-residue polypeptide: Thiamine-phosphate synthase (351 aa).

The unknown stretch occupies residues 1–129; the sequence is MVEPYSQKEQ…AKACKQMRYQ (129 aa). Residues 65 to 85 are disordered; sequence LRAARDTPGDPGTELTHPQEE. Positions 130-351 are thiamine-phosphate synthase; it reads VYTLESNLMG…SQLNRIKPEL (222 aa). 4-amino-2-methyl-5-(diphosphooxymethyl)pyrimidine is bound by residues 177 to 181 and Asn-209; that span reads QYRDK. Mg(2+) is bound by residues Asp-210 and Asp-229. Ser-248 is a 4-amino-2-methyl-5-(diphosphooxymethyl)pyrimidine binding site. 274 to 276 provides a ligand contact to 2-[(2R,5Z)-2-carboxy-4-methylthiazol-5(2H)-ylidene]ethyl phosphate; that stretch reads TPT. Lys-277 provides a ligand contact to 4-amino-2-methyl-5-(diphosphooxymethyl)pyrimidine. Gly-304 contacts 2-[(2R,5Z)-2-carboxy-4-methylthiazol-5(2H)-ylidene]ethyl phosphate.

This sequence belongs to the thiamine-phosphate synthase family. The cofactor is Mg(2+).

It carries out the reaction 2-[(2R,5Z)-2-carboxy-4-methylthiazol-5(2H)-ylidene]ethyl phosphate + 4-amino-2-methyl-5-(diphosphooxymethyl)pyrimidine + 2 H(+) = thiamine phosphate + CO2 + diphosphate. It catalyses the reaction 2-(2-carboxy-4-methylthiazol-5-yl)ethyl phosphate + 4-amino-2-methyl-5-(diphosphooxymethyl)pyrimidine + 2 H(+) = thiamine phosphate + CO2 + diphosphate. The catalysed reaction is 4-methyl-5-(2-phosphooxyethyl)-thiazole + 4-amino-2-methyl-5-(diphosphooxymethyl)pyrimidine + H(+) = thiamine phosphate + diphosphate. Its pathway is cofactor biosynthesis; thiamine diphosphate biosynthesis; thiamine phosphate from 4-amino-2-methyl-5-diphosphomethylpyrimidine and 4-methyl-5-(2-phosphoethyl)-thiazole: step 1/1. In terms of biological role, condenses 4-methyl-5-(beta-hydroxyethyl)thiazole monophosphate (THZ-P) and 2-methyl-4-amino-5-hydroxymethyl pyrimidine pyrophosphate (HMP-PP) to form thiamine monophosphate (TMP). The protein is Thiamine-phosphate synthase of Nostoc punctiforme (strain ATCC 29133 / PCC 73102).